Here is a 272-residue protein sequence, read N- to C-terminus: Bis(5'-nucleosyl)-tetraphosphatase, symmetrical (272 aa).

This sequence belongs to the Ap4A hydrolase family.

It catalyses the reaction P(1),P(4)-bis(5'-adenosyl) tetraphosphate + H2O = 2 ADP + 2 H(+). In terms of biological role, hydrolyzes diadenosine 5',5'''-P1,P4-tetraphosphate to yield ADP. This is Bis(5'-nucleosyl)-tetraphosphatase, symmetrical from Ectopseudomonas mendocina (strain ymp) (Pseudomonas mendocina).